We begin with the raw amino-acid sequence, 105 residues long: DEPLKTDLVSPPVCGNYFVEVGEDCDCGSPATCRDSCCDAATCKLRQGAQCREGLCCDQCRFKGAGTECRAATDECDMADLCTGRSAECTDRFQRNGQPCQNNNG.

One can recognise a Peptidase M12B domain in the interval aspartate 1 to proline 3. The Disintegrin domain occupies proline 11 to asparagine 96. Cystine bridges form between cysteine 25-cysteine 43, cysteine 27-cysteine 38, cysteine 37-cysteine 60, cysteine 51-cysteine 57, cysteine 56-cysteine 82, and cysteine 69-cysteine 89. A D/ECD-tripeptide motif is present at residues glutamate 75 to aspartate 77. Residues proline 99 to glycine 105 constitute a propeptide that is removed on maturation.

This sequence belongs to the venom metalloproteinase (M12B) family. P-III subfamily. As to quaternary structure, monomer. Zn(2+) serves as cofactor. As to expression, expressed by the venom gland.

The protein localises to the secreted. In terms of biological role, impairs hemostasis in the envenomed animal. Inhibits platelet aggregation induced by ADP, thrombin, platelet-activating factor and collagen. Acts by inhibiting fibrinogen interaction with platelet receptors GPIIb/GPIIIa (ITGA2B/ITGB3). This Gloydius brevicauda (Korean slamosa snake) protein is Zinc metalloproteinase/disintegrin.